A 440-amino-acid chain; its full sequence is Histidinol dehydrogenase (440 aa).

NAD(+) is bound by residues Y134, Q196, and N219. Residues S242, Q264, and H267 each contribute to the substrate site. Residues Q264 and H267 each contribute to the Zn(2+) site. Catalysis depends on proton acceptor residues E332 and H333. Substrate is bound by residues H333, D366, E420, and H425. D366 serves as a coordination point for Zn(2+). Residue H425 coordinates Zn(2+).

It belongs to the histidinol dehydrogenase family. Zn(2+) serves as cofactor.

It carries out the reaction L-histidinol + 2 NAD(+) + H2O = L-histidine + 2 NADH + 3 H(+). It functions in the pathway amino-acid biosynthesis; L-histidine biosynthesis; L-histidine from 5-phospho-alpha-D-ribose 1-diphosphate: step 9/9. Catalyzes the sequential NAD-dependent oxidations of L-histidinol to L-histidinaldehyde and then to L-histidine. The chain is Histidinol dehydrogenase from Prochlorococcus marinus (strain SARG / CCMP1375 / SS120).